Consider the following 148-residue polypeptide: Small ribosomal subunit protein uS15 (148 aa).

Belongs to the universal ribosomal protein uS15 family.

In Encephalitozoon cuniculi (strain GB-M1) (Microsporidian parasite), this protein is Small ribosomal subunit protein uS15 (RPS13).